We begin with the raw amino-acid sequence, 317 residues long: Alkylsulfatase (317 aa).

His-78 is a binding site for substrate. Positions 105 and 107 each coordinate Fe cation. Substrate is bound at residue Val-108. 2-oxoglutarate is bound at residue Thr-132. His-261 is a Fe cation binding site. Residues Arg-272 and Arg-276 each coordinate 2-oxoglutarate.

This sequence belongs to the TfdA dioxygenase family. Homotetramer. The cofactor is Fe(2+).

In terms of biological role, alpha-ketoglutarate-dependent dioxygenase that in vitro catalyzes the oxygenolytic release of sulfite from hexylsulfate. The chain is Alkylsulfatase from Acinetobacter baylyi (strain ATCC 33305 / BD413 / ADP1).